A 275-amino-acid chain; its full sequence is uncharacterized protein (275 aa).

The region spanning 171-268 is the HTH araC/xylS-type domain; sequence KMVCEFLEEH…GLTPKQYMKI (98 aa). DNA-binding regions (H-T-H motif) lie at residues 188–209 and 235–258; these read NDLSELTGWSKYHLLRSFTKQK and PIDAAFQTGFSDQSHMTKFFKRQV.

This is an uncharacterized protein from Bacillus subtilis (strain 168).